Reading from the N-terminus, the 296-residue chain is UDP-N-acetylenolpyruvoylglucosamine reductase (296 aa).

An FAD-binding PCMH-type domain is found at 19 to 203 (KVGGFAEYFS…LETTQKNLKK (185 aa)). R166 is an active-site residue. Catalysis depends on S217, which acts as the Proton donor. Residue E287 is part of the active site.

It belongs to the MurB family. FAD serves as cofactor.

The protein localises to the cytoplasm. The enzyme catalyses UDP-N-acetyl-alpha-D-muramate + NADP(+) = UDP-N-acetyl-3-O-(1-carboxyvinyl)-alpha-D-glucosamine + NADPH + H(+). It participates in cell wall biogenesis; peptidoglycan biosynthesis. Its function is as follows. Cell wall formation. This is UDP-N-acetylenolpyruvoylglucosamine reductase from Prochlorococcus marinus subsp. pastoris (strain CCMP1986 / NIES-2087 / MED4).